We begin with the raw amino-acid sequence, 213 residues long: Dimethylamine corrinoid protein (213 aa).

A B12-binding N-terminal domain is found at 1–90 (MSKEELLQEL…LMPEGASGSK (90 aa)). One can recognise a B12-binding domain in the interval 91–213 (LGVIVNGTVE…AVAKAKELLA (123 aa)). H104 lines the methylcob(III)alamin pocket.

The protein belongs to the methylamine corrinoid protein family. In terms of assembly, copurifies with MtbA.

The protein operates within one-carbon metabolism; methanogenesis from dimethylamine. Its function is as follows. Acts as a methyl group carrier between MtbB1 and MtbA. Binds 1 corrinoid cofactor per protein, is subsequently demethylated by MtbA. The polypeptide is Dimethylamine corrinoid protein (Methanosarcina barkeri).